Here is a 158-residue protein sequence, read N- to C-terminus: NADPH-dependent 7-cyano-7-deazaguanine reductase (158 aa).

Cysteine 56 functions as the Thioimide intermediate in the catalytic mechanism. The Proton donor role is filled by aspartate 63. Substrate is bound by residues 78 to 80 (LES) and 97 to 98 (HE).

Belongs to the GTP cyclohydrolase I family. QueF type 1 subfamily.

Its subcellular location is the cytoplasm. The enzyme catalyses 7-aminomethyl-7-carbaguanine + 2 NADP(+) = 7-cyano-7-deazaguanine + 2 NADPH + 3 H(+). It participates in tRNA modification; tRNA-queuosine biosynthesis. Its function is as follows. Catalyzes the NADPH-dependent reduction of 7-cyano-7-deazaguanine (preQ0) to 7-aminomethyl-7-deazaguanine (preQ1). The protein is NADPH-dependent 7-cyano-7-deazaguanine reductase of Nitrobacter hamburgensis (strain DSM 10229 / NCIMB 13809 / X14).